A 298-amino-acid polypeptide reads, in one-letter code: Specificity protein transcription factor 1 (298 aa).

The segment covering 206 to 218 (VSSGSESVSARGT) has biased composition (low complexity). The tract at residues 206–233 (VSSGSESVSARGTSGSGGTGKYPSSRTA) is disordered. The C2H2-type zinc-finger motif lies at 260–284 (HNCHIAGCGKVYNKSSHLKAHLRWH).

Belongs to the Sp1 C2H2-type zinc-finger protein family. As to expression, expressed in ASJ sensory neurons, pharyngeal cells, rectal cells, intestine, seam cells, and vulval cells.

In terms of biological role, probable transcription factor which modulates gene expression, thereby acting as an ASJ sensory neuron terminal selector gene. The chain is Specificity protein transcription factor 1 from Caenorhabditis elegans.